We begin with the raw amino-acid sequence, 403 residues long: Anti-sigma-I factor RsgI8 (403 aa).

At 1–59 (MTKQKGTILKLKNNLAIIMTSDCKIVSIKRQPGMYEGLEISFNKNEIINKKNKLAFYSR) the chain is on the cytoplasmic side. A RsgI N-terminal anti-sigma domain is found at 4–51 (QKGTILKLKNNLAIIMTSDCKIVSIKRQPGMYEGLEISFNKNEIINKK). The chain crosses the membrane as a helical span at residues 60–80 (IAAGIAAIFIIMVISFNLFNN). Residues 81–403 (NDVYAYVAID…KAKNSIEKMP (323 aa)) lie on the Extracellular side of the membrane. Composition is skewed to basic and acidic residues over residues 254-314 (VHNV…EPAK), 324-335 (LPKDKTIPEEKT), and 349-403 (VEPK…EKMP). The tract at residues 254 to 403 (VHNVKKEEPK…KAKNSIEKMP (150 aa)) is disordered.

Interacts (via RsgI N-terminal anti-sigma domain) with SigI8.

The protein resides in the cell membrane. Functionally, anti-sigma factor for SigI8. Negatively regulates SigI8 activity through direct interaction. In Acetivibrio thermocellus (strain ATCC 27405 / DSM 1237 / JCM 9322 / NBRC 103400 / NCIMB 10682 / NRRL B-4536 / VPI 7372) (Clostridium thermocellum), this protein is Anti-sigma-I factor RsgI8.